Consider the following 210-residue polypeptide: LQTSEIEVFQLLGLDGSTSLIALDIDAARRKLVQLPWVEDVDIRKVYPKTVEVRLKERQAFGIWQHGTELSLIEKSGSVIAPLRDNKFAALPLFVGRDAETGAAGFVAQLADWPEIRNRVRAYVRIAGRRWDLHLDNGIVVKLPEENLPQALQLLARLDLEEKVLSRDVAAVDLRLTDRTTIQLTEGAAERRQTAVDARTKALKKAEKNT.

The 58-residue stretch at 1–58 (LQTSEIEVFQLLGLDGSTSLIALDIDAARRKLVQLPWVEDVDIRKVYPKTVEVRLKER) folds into the POTRA domain. A helical membrane pass occupies residues 8–25 (VFQLLGLDGSTSLIALDI).

This sequence belongs to the FtsQ/DivIB family. FtsQ subfamily.

Its subcellular location is the cell inner membrane. Functionally, essential cell division protein. The chain is Cell division protein FtsQ from Rhizobium radiobacter (Agrobacterium tumefaciens).